The chain runs to 348 residues: PDZ and LIM domain protein 2 (348 aa).

The 84-residue stretch at 1-84 folds into the PDZ domain; the sequence is MALTVDVVGP…PLRLQLDRPQ (84 aa). Residues 67-139 are disordered; it reads SKIRQSPSPL…PPTSPQAPTG (73 aa). The segment covering 103 to 118 has biased composition (polar residues); it reads RFQSSRRTHTDSQASL. Residues serine 117, serine 119, and serine 124 each carry the phosphoserine modification. Residues threonine 128 and threonine 132 each carry the phosphothreonine modification. A phosphoserine mark is found at serine 133, serine 153, serine 191, serine 197, serine 198, serine 202, serine 209, and serine 262. Residues 165–202 form a disordered region; the sequence is GGRRGSRQASLSPAGDSAVLVLPPPPSPGARSSSSRLS. Residues 193 to 202 are compositionally biased toward low complexity; that stretch reads GARSSSSRLS. The disordered stretch occupies residues 249–275; that stretch reads ERGGTPAYLPSSLSPQSSLPTSRALAS. Low complexity predominate over residues 257–270; sequence LPSSLSPQSSLPTS. In terms of domain architecture, LIM zinc-binding spans 280 to 340; sequence HTCEKCNTSI…EKHARQRYSA (61 aa).

Interacts with alpha-actinins ACTN1 and ACTN4, FLNA and MYH9. Interacts (via LIM zinc-binding domain) with MKRN2.

Its subcellular location is the cytoplasm. It localises to the cytoskeleton. Its function is as follows. Probable adapter protein located at the actin cytoskeleton that promotes cell attachment. Necessary for the migratory capacity of epithelial cells. Overexpression enhances cell adhesion to collagen and fibronectin and suppresses anchorage independent growth. May contribute to tumor cell migratory capacity. The sequence is that of PDZ and LIM domain protein 2 (PDLIM2) from Bos taurus (Bovine).